A 306-amino-acid chain; its full sequence is MPVRHLLGLADMPAAEINEFLENALPMKQIISRDIKKVPTLRGKTVVTLFYEPSTRTRMSFELAAKYLSADTVNVSASASSATKGESLADTARTIAALGADLVVLRHPCAGAPHLLARMIDVPVVNAGDGMHEHPTQALLDLFTLREKRPDLEGLKLVIIGDILHSRVARSNIWALTRFGVDVHLVAPPTLLPAGIAAFGVTVHDRPEDALPDAGAVMVLRLQRERQQEGLIPDVREYARLYGLNSERLALTRPDAIVMHPGPMNRGIEIAHTVADGTRAVITDQVTNGVAVRMAVLYLLMLGRVD.

Carbamoyl phosphate-binding residues include R56 and T57. K84 contributes to the L-aspartate binding site. Residues R106, H134, and Q137 each coordinate carbamoyl phosphate. The L-aspartate site is built by R167 and R221. Residues G262 and P263 each contribute to the carbamoyl phosphate site.

This sequence belongs to the aspartate/ornithine carbamoyltransferase superfamily. ATCase family. In terms of assembly, heterododecamer (2C3:3R2) of six catalytic PyrB chains organized as two trimers (C3), and six regulatory PyrI chains organized as three dimers (R2).

The enzyme catalyses carbamoyl phosphate + L-aspartate = N-carbamoyl-L-aspartate + phosphate + H(+). Its pathway is pyrimidine metabolism; UMP biosynthesis via de novo pathway; (S)-dihydroorotate from bicarbonate: step 2/3. Functionally, catalyzes the condensation of carbamoyl phosphate and aspartate to form carbamoyl aspartate and inorganic phosphate, the committed step in the de novo pyrimidine nucleotide biosynthesis pathway. This chain is Aspartate carbamoyltransferase catalytic subunit, found in Desulforudis audaxviator (strain MP104C).